The sequence spans 836 residues: MGLLSAVFGTYSEREVKRIRPIVSKINELDEVMQKLSDDELKAKTVEFKERLNNGETVDDILPEAFAVVREASKRVLNMKHYDEQLIGGVVLHQGRIAEMKTGEGKTLVATLPAYLNGLTGKGVHIITVNDYLAKRDAEQMGELYGFLGLTTGVIVHELTNEQRREAYNSDITYGTNNEFGFDYLRDNMVIYKEERVQRKLNFTIVDEVDSILIDEARTPLIISGQGEKSTEFYKVADYFVKTLVKEKDYTIDEKANAVMLTDEGFHKAEQTFKVENYADAENVELQHYVTQALKANYAMRRDKDYMVKDGEVIIVDEFTGRLMEGRRYSDGLHQAIEAKENVKIARESKTLATITFQNYFRMYEKLSGMTGTALTEENEFREIYGLDVIVVPTHKPVVRIDNPDLVFKSEKGKIMAVVDEIAKAHEVGQPVLVGTVSIEKSELISSMLKKKGVPHQVLNAKFHEQEAEIITHAGEKGMVTIATNMAGRGTDIKLGEGVLEIGGLKIIGTERHESRRIDNQLRGRSGRQGDSGESTFFISLEDDLMRIFGSEKIQGVVEKLGLEEDEAIESKLVSKSIENAQKKVEGNNFDIRKTLLGYDDVMNKQREVIYKQRSEVLEGEDVKEEILHMLRDVISDAVNTHIKEDAEDYRESFLYLISYLNDICIPTNEVNLPALADMSKEEIVDHLYDVAVKSYENKEAEFTPERLREIERVVLLRSVDTKWMDHINNMDNLKQGIGLRAFKQVDPVQAYQMEGSAMFEEMIDSIKNETVKMLFHVKVERAPERVRVAQETNAVHGDKPSAPVGPVRNLNKFGRNDVCPCGSGKKFKNCCGREA.

ATP is bound by residues Gln85, 103–107 (GEGKT), and Asp492. Residues Cys820, Cys822, Cys831, and Cys832 each contribute to the Zn(2+) site.

The protein belongs to the SecA family. Monomer and homodimer. Part of the essential Sec protein translocation apparatus which comprises SecA, SecYEG and auxiliary proteins SecDF. Other proteins may also be involved. Zn(2+) serves as cofactor.

The protein resides in the cell membrane. It localises to the cytoplasm. The catalysed reaction is ATP + H2O + cellular proteinSide 1 = ADP + phosphate + cellular proteinSide 2.. In terms of biological role, part of the Sec protein translocase complex. Interacts with the SecYEG preprotein conducting channel. Has a central role in coupling the hydrolysis of ATP to the transfer of proteins into and across the cell membrane, serving as an ATP-driven molecular motor driving the stepwise translocation of polypeptide chains across the membrane. This chain is Protein translocase subunit SecA, found in Clostridium botulinum (strain Alaska E43 / Type E3).